We begin with the raw amino-acid sequence, 1005 residues long: MAQGFAVGFDPLGLGDLSSGSLSSLSSRGHLGSDSGSTATRYLLRKQQRLPNVPPRGIRASSPMGRVILINSPIEANSDESDIIHSVRVEKSPAGRLGFSVRGGSEHGLGIFVSKVEEGSSAERAGLCVGDKITEVNGLSLESTTMGSAVKVLTGSSRLHMMVRRMGRVPGIKFSKEKTTWVDVVNRRLVVEKCSSTPSDTSSEDGIRRIVHLYTTSDDFCLGFNIRGGKEFGLGIYVSKVDHGGLAEENGIKVGDQVLAANGVRFDDISHSQAVEVLKGQTHIMLTIKETGRYPAYKEMVSEYCWLDRLSNGVLQQLSPASESSSSVFSCASSAPYSSDSLPSDRMDICLGPEEPGSRGPGWGRADTAMQTEPDAGGRVETWCSVRPTVILRDTTIRSDGPQPGRCLDSAISESPKTALLLALSRPRPPITRSQSYLTLWEEKKQRKKEKSGSTGEKGALQRSKTLMNLFFKGGRQGRLARDGRREAWTPDSGSLAKTCPRLDMEKAGGMGPVQKFVTWRLRRDRERGRALLSARSGSPSSQLPNVDEQVQAWESRRPLIQDLAQRLLTDDEVLAVTRHCSRYVHEGGIEDLVRPLLAILDRPEKLLLLRDIRSVVAPTDLGRFDSMVMPVELEAFEALKSRAVRPPALRPARQDTPPKRHLITPVPDSRGGFYLLPVNGFPEEEDDEELRERLGALKVSPSASAPRHPHKGIPPLQDVPVDAFTPLRSACTPPPQLPHVARRPPRPNWLLTEPLSREHPPQSQIRGRAQSRSRSRSRSRSRSRSSRGQGKSPGRRSPSPVPIPAPSMANGRYHKPQKARPPLPRPLDGEAAKMGAKQGSSENGTGGTAEEAAMKTPSGELKTVTLSKMKQSLGISISGGIESKVQPMVKIEKIFPGGAAFLSGALQAGFELVAVDGESLEQVTHQRAVDTIRRAYRNKAREPMELVVRVPGPSPRPSPSDSSALTDGGLPAAHQPLDAAPVPAHWLPEPPTNPQTPPTDARLL.

PDZ domains follow at residues 86–168 (SVRV…RMGR) and 210–293 (IVHL…ETGR). Disordered regions lie at residues 353 to 378 (PEEP…DAGG), 700 to 859 (VSPS…KTPS), and 949 to 1005 (VRVP…ARLL). Residues 770–786 (AQSRSRSRSRSRSRSRS) are compositionally biased toward basic residues. Residues 787–799 (SRGQGKSPGRRSP) show a composition bias toward low complexity. Positions 989–998 (PEPPTNPQTP) are enriched in pro residues.

As to quaternary structure, homodimerizes (via PDZ2 domain). Component of USH2 complex, composed of ADGRV1, PDZD7, USH2A and WHRN. Interacts (via PDZ domains) with WHRN; the interaction is direct. Interacts with USH1G. Interacts with ADGRV1 (via the cytoplasmic region). Interacts with USH2A (via the cytoplasmic region). Interacts with MYO7A (via MyTH4-FERM domains).

The protein localises to the cell projection. It localises to the cilium. It is found in the nucleus. Its subcellular location is the stereocilium. In terms of biological role, in cochlear developing hair cells, essential in organizing the USH2 complex at stereocilia ankle links. Blocks inhibition of adenylate cyclase activity mediated by ADGRV1. The chain is PDZ domain-containing protein 7 (PDZD7) from Pongo abelii (Sumatran orangutan).